Reading from the N-terminus, the 565-residue chain is Deformed epidermal autoregulatory factor 1 homolog (565 aa).

2 disordered regions span residues G34–R62 and G162–T190. Pro residues predominate over residues P169 to L181. Residue T171 is modified to Phosphothreonine. A Phosphoserine modification is found at S176. T179 bears the Phosphothreonine mark. Residues N193 to N273 enclose the SAND domain. The Nuclear localization signal signature appears at K301–K316. The interaction with LMO4 stretch occupies residues I403 to K478. Phosphothreonine is present on T432. Phosphoserine is present on S448. Zn(2+) is bound by residues C504, C507, C515, C518, C524, C528, H536, and C540. The MYND-type zinc-finger motif lies at C504 to C540.

Homodimer. Interacts with LMO4; LMO4 blocks export from nucleus. Interacts with LMO2 and CLIM2. May interact with the corepressors NCOR1 and NCRO2. Identified in a complex with XRCC5 and XRCC6. Interacts (via the SAND domain) with the DNA-PK complex subunit XRCC6; the interaction is direct and may be inhibited by DNA-binding. In terms of processing, may be phosphorylated by DNA-PK complex in a DNA independent manner (in vitro).

It is found in the nucleus. In terms of biological role, transcription factor that binds to sequence with multiple copies of 5'-TTC[CG]G-3' present in its own promoter and that of the HNRPA2B1 gene. Down-regulates transcription of these genes. Binds to the retinoic acid response element (RARE) 5'-AGGGTTCACCGAAAGTTCA-3'. Activates the proenkephalin gene independently of promoter binding, probably through protein-protein interaction. Regulates epithelial cell proliferation and side-branching in the mammary gland. Required for neural tube closure and skeletal patterning. Controls the expression of peripheral tissue antigens in pancreatic lymph nodes. Transcriptional activator of EIF4G3. May also involved in behavior. This chain is Deformed epidermal autoregulatory factor 1 homolog (DEAF1), found in Pan troglodytes (Chimpanzee).